The chain runs to 390 residues: Protein TAB2 homolog, chloroplastic (390 aa).

The N-terminal 69 residues, 1 to 69 (MTTATAIVAG…RSISSESSTE (69 aa)), are a transit peptide targeting the chloroplast. The disordered stretch occupies residues 16 to 85 (RRSLPLPNPP…IADEEVEAEN (70 aa)). Over residues 61 to 75 (SISSESSTEASAAAD) the composition is skewed to low complexity.

It localises to the plastid. The protein localises to the chloroplast. Nuclear genome-encoded factor involved in the biogenesis of photosystem I (PSI). Required for the accumulation of PSI during plant development. Does not seem to be required for the translation of mRNAs of the PSI subunits. In Zea mays (Maize), this protein is Protein TAB2 homolog, chloroplastic.